The following is a 333-amino-acid chain: Lipoyl synthase (333 aa).

[4Fe-4S] cluster contacts are provided by Cys56, Cys61, Cys67, Cys82, Cys86, Cys89, and Ser293. The Radical SAM core domain occupies 68-282 (WEDREATFLI…GRVGAELGFS (215 aa)). The interval 301-333 (QQAMTARDQDRSEMSVPPESVSENSHGQRPSPW) is disordered. Over residues 314–325 (MSVPPESVSENS) the composition is skewed to low complexity.

This sequence belongs to the radical SAM superfamily. Lipoyl synthase family. [4Fe-4S] cluster is required as a cofactor.

The protein localises to the cytoplasm. It carries out the reaction [[Fe-S] cluster scaffold protein carrying a second [4Fe-4S](2+) cluster] + N(6)-octanoyl-L-lysyl-[protein] + 2 oxidized [2Fe-2S]-[ferredoxin] + 2 S-adenosyl-L-methionine + 4 H(+) = [[Fe-S] cluster scaffold protein] + N(6)-[(R)-dihydrolipoyl]-L-lysyl-[protein] + 4 Fe(3+) + 2 hydrogen sulfide + 2 5'-deoxyadenosine + 2 L-methionine + 2 reduced [2Fe-2S]-[ferredoxin]. Its pathway is protein modification; protein lipoylation via endogenous pathway; protein N(6)-(lipoyl)lysine from octanoyl-[acyl-carrier-protein]: step 2/2. Functionally, catalyzes the radical-mediated insertion of two sulfur atoms into the C-6 and C-8 positions of the octanoyl moiety bound to the lipoyl domains of lipoate-dependent enzymes, thereby converting the octanoylated domains into lipoylated derivatives. The sequence is that of Lipoyl synthase from Frankia casuarinae (strain DSM 45818 / CECT 9043 / HFP020203 / CcI3).